A 396-amino-acid polypeptide reads, in one-letter code: S-adenosylmethionine synthase (396 aa).

Residue histidine 16 participates in ATP binding. A Mg(2+)-binding site is contributed by aspartate 18. K(+) is bound at residue glutamate 44. L-methionine is bound by residues glutamate 57 and glutamine 100. The tract at residues 100-110 is flexible loop; it reads QSVDINQGVDR. ATP contacts are provided by residues 165-167, 231-232, aspartate 240, 246-247, alanine 263, and lysine 267; these read DAK, KF, and RK. Aspartate 240 is an L-methionine binding site. Lysine 271 contributes to the L-methionine binding site.

The protein belongs to the AdoMet synthase family. As to quaternary structure, homotetramer; dimer of dimers. It depends on Mg(2+) as a cofactor. K(+) serves as cofactor.

Its subcellular location is the cytoplasm. The enzyme catalyses L-methionine + ATP + H2O = S-adenosyl-L-methionine + phosphate + diphosphate. Its pathway is amino-acid biosynthesis; S-adenosyl-L-methionine biosynthesis; S-adenosyl-L-methionine from L-methionine: step 1/1. Catalyzes the formation of S-adenosylmethionine (AdoMet) from methionine and ATP. The overall synthetic reaction is composed of two sequential steps, AdoMet formation and the subsequent tripolyphosphate hydrolysis which occurs prior to release of AdoMet from the enzyme. This is S-adenosylmethionine synthase from Azotobacter vinelandii (strain DJ / ATCC BAA-1303).